Here is a 552-residue protein sequence, read N- to C-terminus: Beta-hexosaminidase A (552 aa).

Residues Met1–Ala15 form the signal peptide. The N-linked (GlcNAc...) asparagine glycan is linked to Asn44. The active-site Proton donor is Glu322. N-linked (GlcNAc...) asparagine glycosylation is found at Asn348, Asn409, and Asn457.

Belongs to the glycosyl hydrolase 20 family.

Its subcellular location is the lysosome. The enzyme catalyses Hydrolysis of terminal non-reducing N-acetyl-D-hexosamine residues in N-acetyl-beta-D-hexosaminides.. In terms of biological role, responsible for the degradation of GM2 gangliosides, and a variety of other molecules containing terminal N-acetyl hexosamines. Degrades chitotriose. The protein is Beta-hexosaminidase A of Caenorhabditis briggsae.